A 164-amino-acid polypeptide reads, in one-letter code: Ribosome maturation factor RimM (164 aa).

Residues 90–161 enclose the PRC barrel domain; the sequence is KGSYFIADLI…TVTIKPLEIW (72 aa).

This sequence belongs to the RimM family. Binds ribosomal protein uS19.

It localises to the cytoplasm. In terms of biological role, an accessory protein needed during the final step in the assembly of 30S ribosomal subunit, possibly for assembly of the head region. Essential for efficient processing of 16S rRNA. May be needed both before and after RbfA during the maturation of 16S rRNA. It has affinity for free ribosomal 30S subunits but not for 70S ribosomes. The sequence is that of Ribosome maturation factor RimM from Clostridium botulinum (strain Hall / ATCC 3502 / NCTC 13319 / Type A).